A 569-amino-acid polypeptide reads, in one-letter code: Sialic acid-binding Ig-like lectin 5 (569 aa).

An N-terminal signal peptide occupies residues 1–16 (MRWAWLLPLLWAGCLA). At 17 to 439 (TDGYSLSVTG…KSETSRGTVL (423 aa)) the chain is on the extracellular side. The Ig-like V-type domain maps to 18–116 (DGYSLSVTGS…DTGTYFFRLD (99 aa)). 4 disulfide bridges follow: cysteine 35-cysteine 163, cysteine 40-cysteine 96, cysteine 157-cysteine 206, and cysteine 265-cysteine 308. The N-linked (GlcNAc...) asparagine glycan is linked to asparagine 95. N-acetylneuraminate-binding residues include arginine 114, lysine 120, and serine 122. 2 consecutive Ig-like C2-type domains span residues 139-224 (PNIQ…QQLS) and 229-324 (PQKM…VSLS). Residues asparagine 151, asparagine 200, and asparagine 203 are each glycosylated (N-linked (GlcNAc...) asparagine). Residues asparagine 369, asparagine 372, and asparagine 387 are each glycosylated (N-linked (GlcNAc...) asparagine). Residues 440–460 (GAIWGAGLMALLAVCLCLIFF) form a helical membrane-spanning segment. At 461 to 569 (TVKVLRKKSA…VYTEIKIHKC (109 aa)) the chain is on the cytoplasmic side. Residues 508 to 556 (HLNEPGSQTQKEQPPLATVPDTQKDEPELHYASLSFQGPMPPKPQNTEA) form a disordered region. The short motif at 536-541 (LHYASL) is the ITIM motif element. The short motif at 559–564 (SVYTEI) is the SLAM-like motif element.

The protein belongs to the immunoglobulin superfamily. SIGLEC (sialic acid binding Ig-like lectin) family. Predominantly expressed by immature monocytic/myeloid lineage cells in bone marrow. Also found at lower levels in mature neutrophils and monocytes.

The protein resides in the membrane. Functionally, putative adhesion molecule that mediates sialic-acid dependent binding to cells. Preferentially binds to alpha-2,3-linked sialic acid. The sialic acid recognition site may be masked by cis interactions with sialic acids on the same cell surface. The polypeptide is Sialic acid-binding Ig-like lectin 5 (Siglec5) (Mus musculus (Mouse)).